Here is a 464-residue protein sequence, read N- to C-terminus: 3-isopropylmalate dehydratase large subunit (464 aa).

3 residues coordinate [4Fe-4S] cluster: Cys337, Cys397, and Cys400.

It belongs to the aconitase/IPM isomerase family. LeuC type 1 subfamily. In terms of assembly, heterodimer of LeuC and LeuD. [4Fe-4S] cluster serves as cofactor.

It catalyses the reaction (2R,3S)-3-isopropylmalate = (2S)-2-isopropylmalate. It functions in the pathway amino-acid biosynthesis; L-leucine biosynthesis; L-leucine from 3-methyl-2-oxobutanoate: step 2/4. Catalyzes the isomerization between 2-isopropylmalate and 3-isopropylmalate, via the formation of 2-isopropylmaleate. In Bacillus cereus (strain AH820), this protein is 3-isopropylmalate dehydratase large subunit.